The chain runs to 588 residues: Pleckstrin homology domain-containing family A member 4 (588 aa).

The PH domain occupies proline 54 to arginine 153. 2 disordered regions span residues glutamate 155–methionine 349 and alanine 495–leucine 588. Serine 164 bears the Phosphoserine mark. Positions valine 183 to glutamate 193 are enriched in basic and acidic residues. Polar residues predominate over residues threonine 211 to threonine 222. Low complexity-rich tracts occupy residues proline 246–alanine 260 and glutamine 321–threonine 334. The residue at position 562 (serine 562) is a Phosphoserine.

Its subcellular location is the cytoplasm. The protein localises to the membrane. In terms of biological role, binds specifically to phosphatidylinositol 3-phosphate (PtdIns3P), but not to other phosphoinositides. In Mus musculus (Mouse), this protein is Pleckstrin homology domain-containing family A member 4 (Plekha4).